Consider the following 593-residue polypeptide: FAD-binding monooxygenase acrE (593 aa).

FAD is bound by residues 61-64, 73-74, and Y79; these read TWRF and DS. Residue 71-73 participates in NADP(+) binding; that stretch reads RVD. NADP(+) is bound by residues 200 to 206 and 223 to 224; these read TGASGVQ and RS.

Belongs to the FAD-binding monooxygenase family. FAD is required as a cofactor.

It functions in the pathway secondary metabolite biosynthesis. Functionally, FAD-binding monooxygenase; part of the cluster that mediates the biosynthesis of acurin A, a highly reduced polyketide coupled to a serine via a peptide bond. The activities of the highly reducing polyketide synthase acrA and the nonribosomal peptide synthetase acrB are collectively responsible for the synthesis of the acurin A core structure with a heptaketide backbone produced by acrA covalently fused to a L-serine by acrB. After the formation of the PK-NRP hybrid product, it is detached from acrB by reductive release to set up the formation of the lactam ring by aldol condensation. The hydrolyase acrC then catalyzes water loss to generate a double bond in the ring. This double bond is probably reduced, which is followed by three oxidations at C-22 to generate the carboxylic acid moiety, involving probably the FAD-binding monooxygenase acrE and the cytochrome P450 monooxygenases acrD and acrF. Finally, a last methylation step performed by the O-methyltransferase acrG leads to the production of acurin A. The sequence is that of FAD-binding monooxygenase acrE from Aspergillus aculeatus (strain ATCC 16872 / CBS 172.66 / WB 5094).